The sequence spans 295 residues: 33 kDa chaperonin (295 aa).

Cystine bridges form between cysteine 237/cysteine 239 and cysteine 270/cysteine 273.

It belongs to the HSP33 family. Post-translationally, under oxidizing conditions two disulfide bonds are formed involving the reactive cysteines. Under reducing conditions zinc is bound to the reactive cysteines and the protein is inactive.

Its subcellular location is the cytoplasm. Functionally, redox regulated molecular chaperone. Protects both thermally unfolding and oxidatively damaged proteins from irreversible aggregation. Plays an important role in the bacterial defense system toward oxidative stress. The sequence is that of 33 kDa chaperonin from Shouchella clausii (strain KSM-K16) (Alkalihalobacillus clausii).